Here is a 297-residue protein sequence, read N- to C-terminus: Light-independent protochlorophyllide reductase iron-sulfur ATP-binding protein (297 aa).

Residues 41–46 (GIGKST) and K70 contribute to the ATP site. S45 is a Mg(2+) binding site. Positions 126 and 160 each coordinate [4Fe-4S] cluster. Residues 211–212 (NR) and 235–237 (PDL) contribute to the ATP site.

Belongs to the NifH/BchL/ChlL family. As to quaternary structure, homodimer. Protochlorophyllide reductase is composed of three subunits; BchL, BchN and BchB. Requires [4Fe-4S] cluster as cofactor.

The catalysed reaction is chlorophyllide a + oxidized 2[4Fe-4S]-[ferredoxin] + 2 ADP + 2 phosphate = protochlorophyllide a + reduced 2[4Fe-4S]-[ferredoxin] + 2 ATP + 2 H2O. The protein operates within porphyrin-containing compound metabolism; bacteriochlorophyll biosynthesis (light-independent). Component of the dark-operative protochlorophyllide reductase (DPOR) that uses Mg-ATP and reduced ferredoxin to reduce ring D of protochlorophyllide (Pchlide) to form chlorophyllide a (Chlide). This reaction is light-independent. The L component serves as a unique electron donor to the NB-component of the complex, and binds Mg-ATP. This chain is Light-independent protochlorophyllide reductase iron-sulfur ATP-binding protein, found in Methylorubrum populi (strain ATCC BAA-705 / NCIMB 13946 / BJ001) (Methylobacterium populi).